The sequence spans 156 residues: Transcription elongation factor GreA (156 aa).

Residues 1-84 (MAKYTISKHR…IEDVMRSTDE (84 aa)) adopt a coiled-coil conformation.

The protein belongs to the GreA/GreB family.

Functionally, necessary for efficient RNA polymerase transcription elongation past template-encoded arresting sites. The arresting sites in DNA have the property of trapping a certain fraction of elongating RNA polymerases that pass through, resulting in locked ternary complexes. Cleavage of the nascent transcript by cleavage factors such as GreA or GreB allows the resumption of elongation from the new 3'terminus. GreA releases sequences of 2 to 3 nucleotides. The sequence is that of Transcription elongation factor GreA from Ureaplasma urealyticum serovar 10 (strain ATCC 33699 / Western).